The chain runs to 187 residues: Elongation factor P (187 aa).

This sequence belongs to the elongation factor P family.

Its subcellular location is the cytoplasm. Its pathway is protein biosynthesis; polypeptide chain elongation. Functionally, involved in peptide bond synthesis. Stimulates efficient translation and peptide-bond synthesis on native or reconstituted 70S ribosomes in vitro. Probably functions indirectly by altering the affinity of the ribosome for aminoacyl-tRNA, thus increasing their reactivity as acceptors for peptidyl transferase. This Mycolicibacterium gilvum (strain PYR-GCK) (Mycobacterium gilvum (strain PYR-GCK)) protein is Elongation factor P.